The primary structure comprises 861 residues: MKLSILEAAALTAASVVSAQDDLAYSPPYYPSPWADGHGEWSNAYKRAVDIVSQMTLTEKVNLTTGTGWELERCVGQTGSVPRLGIPSLCLQDSPLGIRMSDYNSAFPAGINVAATWDKKLAYQRGKAMGEEFSDKGIDVQLGPAAGPLGRSPDGGRNWEGFSPDPALTGVLFAETIKGIQDAGVIATAKHYILNEQEHFRQVGEAQGYGFNITETVSSNVDDKTMHELYLWPFADAVRAGVGAVMCSYNQINNSYGCQNSLTLNKLLKAELGFQGFVMSDWSAHHSGVGAALAGLDMSMPGDISFDSGTSFYGTNLTVGVLNGTIPQWRVDDMAVRIMAAYYKVGRDRLWTPPNFSSWTRDEYGFAHFFPSEGAYERVNEFVNVQRDHAQVIRRIGADSVVLLKNDGALPLTGQEKTVGILGEDAGSNPKGANGCSDRGCDKGTLAMAWGSGTANFPYLVTPEQAIQNEVLKGRGNVFAVTDNYDTQQIAAVASQSTVSLVFVNADAGEGFLNVDGNMGDRKNLTLWQNGEEVIKTVTEHCNNTVVVIHSVGPVLIDEWYAHPNVTGILWAGLPGQESGNAIADVLYGRVNPGGKTPFTWGKTRASYGDYLLTEPNNGNGAPQDNFNEGVFIDYRRFDKYNETPIYEFGHGLSYTTFELSGLQVQLINGSSYVPTTGQTSAAQAFGKVEDASSYLYPEGLKRISKFIYPWLNSTDLKASTGDPEYGEPNFEYIPEGATDGSPQPRLPASGGPGGNPGLYEDLFQVSVTITNTGKVAGDEVPQLYVSLGGPNEPKRVLRKFERLHIAPGQQKVWTTTLNRRDLANWDVVAQDWKITPYAKTIFVGTSSRKLPLAGRLPRVQ.

Positions 1–19 (MKLSILEAAALTAASVVSA) are cleaved as a signal peptide. 3 N-linked (GlcNAc...) asparagine glycosylation sites follow: N62, N212, and N253. D281 is an active-site residue. 8 N-linked (GlcNAc...) asparagine glycosylation sites follow: N316, N323, N355, N524, N543, N565, N669, and N713. Residues 735–754 (PEGATDGSPQPRLPASGGPG) are disordered.

The protein belongs to the glycosyl hydrolase 3 family.

Its subcellular location is the secreted. The catalysed reaction is Hydrolysis of terminal, non-reducing beta-D-glucosyl residues with release of beta-D-glucose.. It participates in glycan metabolism; cellulose degradation. Beta-glucosidases are one of a number of cellulolytic enzymes involved in the degradation of cellulosic biomass. Catalyzes the last step releasing glucose from the inhibitory cellobiose. In Aspergillus terreus (strain NIH 2624 / FGSC A1156), this protein is Probable beta-glucosidase A (bglA).